Consider the following 199-residue polypeptide: Holliday junction branch migration complex subunit RuvA (199 aa).

Residues 1 to 63 (MIDYIKGNLV…EDSQRLFGFT (63 aa)) are domain I. The domain II stretch occupies residues 64 to 142 (TRTERLLFEK…DMAPMLEPAA (79 aa)). A flexible linker region spans residues 143–153 (GADKQQKNPQL). Residues 153–199 (LEDALEALRALGYVEKELKKVEKQLKAETLETDEYIRRALALMLKRP) are domain III.

Belongs to the RuvA family. In terms of assembly, homotetramer. Forms an RuvA(8)-RuvB(12)-Holliday junction (HJ) complex. HJ DNA is sandwiched between 2 RuvA tetramers; dsDNA enters through RuvA and exits via RuvB. An RuvB hexamer assembles on each DNA strand where it exits the tetramer. Each RuvB hexamer is contacted by two RuvA subunits (via domain III) on 2 adjacent RuvB subunits; this complex drives branch migration. In the full resolvosome a probable DNA-RuvA(4)-RuvB(12)-RuvC(2) complex forms which resolves the HJ.

Its subcellular location is the cytoplasm. The RuvA-RuvB-RuvC complex processes Holliday junction (HJ) DNA during genetic recombination and DNA repair, while the RuvA-RuvB complex plays an important role in the rescue of blocked DNA replication forks via replication fork reversal (RFR). RuvA specifically binds to HJ cruciform DNA, conferring on it an open structure. The RuvB hexamer acts as an ATP-dependent pump, pulling dsDNA into and through the RuvAB complex. HJ branch migration allows RuvC to scan DNA until it finds its consensus sequence, where it cleaves and resolves the cruciform DNA. This Shouchella clausii (strain KSM-K16) (Alkalihalobacillus clausii) protein is Holliday junction branch migration complex subunit RuvA.